Reading from the N-terminus, the 496-residue chain is NADP-dependent glyceraldehyde-3-phosphate dehydrogenase (496 aa).

Substrate contacts are provided by residues Arg-116 and 169 to 170 (NY). Residues Lys-192, Thr-195, and Asp-230 each contribute to the NADP(+) site. Residue 245-249 (GGDTG) participates in NAD(+) binding. Glu-264 acts as the Proton acceptor in catalysis. 297-299 (RCT) serves as a coordination point for substrate. Cys-298 (nucleophile) is an active-site residue. Glu-391 serves as a coordination point for NADP(+). Arg-451 serves as a coordination point for substrate.

It belongs to the aldehyde dehydrogenase family.

The protein localises to the cytoplasm. The enzyme catalyses D-glyceraldehyde 3-phosphate + NADP(+) + H2O = (2R)-3-phosphoglycerate + NADPH + 2 H(+). Its function is as follows. Important as a means of generating NADPH for biosynthetic reactions. This is NADP-dependent glyceraldehyde-3-phosphate dehydrogenase (GAPN) from Nicotiana plumbaginifolia (Leadwort-leaved tobacco).